The following is a 2605-amino-acid chain: Non-reducing polyketide synthase dbaI (2605 aa).

Positions 97–243 are N-terminal acylcarrier protein transacylase domain (SAT); sequence PNTLLIPLVM…PASEISDLHR (147 aa). The active-site Nucleophile; for transacylase activity is Cys-144. Residue His-262 is the Proton donor/acceptor; for transacylase activity of the active site. The 417-residue stretch at 382-798 folds into the Ketosynthase family 3 (KS3) domain; the sequence is ENDIAVVGMS…GSNASIVVTQ (417 aa). Catalysis depends on for beta-ketoacyl synthase activity residues Cys-547, His-682, and His-721. The segment at 908–1195 is malonyl-CoA:ACP transacylase (MAT) domain; it reads FGGQVSTFVG…VTNMASRALG (288 aa). Residues 1285 to 1420 are N-terminal hotdog fold; it reads PNTLLTFVGY…GRVIFRSISD (136 aa). A PKS/mFAS DH domain is found at 1285 to 1596; it reads PNTLLTFVGY…YVKIPKASMS (312 aa). The product template (PT) domain stretch occupies residues 1316 to 1594; it reads LIRGHIIAQT…ISYVKIPKAS (279 aa). The active-site Proton acceptor; for dehydratase activity is His-1320. Residues 1447-1596 are C-terminal hotdog fold; that stretch reads EVDEVLQNRN…YVKIPKASMS (150 aa). Asp-1504 serves as the catalytic Proton donor; for dehydratase activity. The Carrier domain occupies 1665–1739; that stretch reads GQLTQRIKSI…SLIKCVRKAM (75 aa). Ser-1699 is modified (O-(pantetheine 4'-phosphoryl)serine). Residues 1742-1780 form a disordered region; that stretch reads DADSAEYTTEQSTSEAADSDDKSTNYTTPSTPGEEALDM. A compositionally biased stretch (polar residues) spans 1747–1757; the sequence is EYTTEQSTSEA. Residues 1963-2151 form a methyltransferase domain region; it reads DWPLNRLFYR…VGYGHVDWTD (189 aa). The segment at 2230 to 2473 is NADPH-binding (R) domain; it reads VTGATGSLGC…LSWTPVDVVA (244 aa).

It carries out the reaction 4 malonyl-CoA + acetyl-CoA + AH2 + S-adenosyl-L-methionine + 3 H(+) = 2,4-dihydroxy-3-methyl-6-(2-oxopropyl)benzaldehyde + A + S-adenosyl-L-homocysteine + 4 CO2 + 5 CoA + H2O. The protein operates within secondary metabolite biosynthesis. In terms of biological role, non-reducing polyketide synthase; part of the gene cluster that mediates the biosynthesis of the antibiotic 2,4-dihydroxy-3-methyl-6-(2-oxopropyl)benzaldehyde (DHMBA) and its derivatives. The direct non-reducing polyketide synthase dbaI product is 2,4-dihydroxy-3-methyl-6-(2-oxopropyl)benzaldehyde (DHMBA), produced by condensation of one acetyl-CoA starter unit with 4 malonyl-CoA units and one methylation step. The FAD-dependent monooxygenase dbaH is responsible for the synthesis of yellow pigments derived from the oxidation of DHMBA. The roles of dbaB, C, E and F have still to be determined. The polypeptide is Non-reducing polyketide synthase dbaI (Emericella nidulans (strain FGSC A4 / ATCC 38163 / CBS 112.46 / NRRL 194 / M139) (Aspergillus nidulans)).